The sequence spans 394 residues: Elongation factor Tu 1 (394 aa).

The 195-residue stretch at 10-204 (KPHVNVGTIG…ALDNYIPEPE (195 aa)) folds into the tr-type G domain. Residues 19-26 (GHVDHGKT) are G1. Position 19-26 (19-26 (GHVDHGKT)) interacts with GTP. T26 lines the Mg(2+) pocket. The tract at residues 60–64 (GITIS) is G2. The segment at 81–84 (DCPG) is G3. GTP contacts are provided by residues 81–85 (DCPGH) and 136–139 (NKCD). Residues 136 to 139 (NKCD) are G4. Residues 174–176 (SAL) are G5.

Belongs to the TRAFAC class translation factor GTPase superfamily. Classic translation factor GTPase family. EF-Tu/EF-1A subfamily. In terms of assembly, monomer.

It localises to the cytoplasm. It carries out the reaction GTP + H2O = GDP + phosphate + H(+). GTP hydrolase that promotes the GTP-dependent binding of aminoacyl-tRNA to the A-site of ribosomes during protein biosynthesis. This is Elongation factor Tu 1 from Photobacterium profundum (strain SS9).